Consider the following 620-residue polypeptide: 1-deoxy-D-xylulose-5-phosphate synthase (620 aa).

Residues histidine 80 and 121–123 (GHS) each bind thiamine diphosphate. Aspartate 152 is a binding site for Mg(2+). Residues 153–154 (GA), asparagine 181, tyrosine 288, and glutamate 370 each bind thiamine diphosphate. Residue asparagine 181 coordinates Mg(2+).

This sequence belongs to the transketolase family. DXPS subfamily. Homodimer. The cofactor is Mg(2+). Requires thiamine diphosphate as cofactor.

It catalyses the reaction D-glyceraldehyde 3-phosphate + pyruvate + H(+) = 1-deoxy-D-xylulose 5-phosphate + CO2. It participates in metabolic intermediate biosynthesis; 1-deoxy-D-xylulose 5-phosphate biosynthesis; 1-deoxy-D-xylulose 5-phosphate from D-glyceraldehyde 3-phosphate and pyruvate: step 1/1. Its function is as follows. Catalyzes the acyloin condensation reaction between C atoms 2 and 3 of pyruvate and glyceraldehyde 3-phosphate to yield 1-deoxy-D-xylulose-5-phosphate (DXP). This chain is 1-deoxy-D-xylulose-5-phosphate synthase, found in Salmonella paratyphi A (strain ATCC 9150 / SARB42).